Here is a 155-residue protein sequence, read N- to C-terminus: uncharacterized protein (155 aa).

2 helical membrane-spanning segments follow: residues 33 to 53 (ITLL…LFLL) and 83 to 103 (IGAV…GIWV).

It to E.coli YdgK.

It localises to the cell membrane. This is an uncharacterized protein from Synechocystis sp. (strain ATCC 27184 / PCC 6803 / Kazusa).